Consider the following 316-residue polypeptide: Apolipoprotein E (316 aa).

Residues 1–18 (MKVLWVALVVALLAGCQA) form the signal peptide. 8 repeat units span residues 79–100 (VLMEETMKEVKAYREELEGQLA), 101–122 (PMAQETQARVSKELQAAQARLG), 123–144 (SDMEDLRNRLAQYRSEVQAMLG), 145–166 (QSTEELRARMASHLRKLRKRLL), 167–188 (RDADDLKKRLAVYQAGASEGAE), 189–210 (RSVSAIRERLRPLVEQSQSRAA), 211–232 (TLSTQVGQPLLDRAEAWRQKLH), and 233–254 (GRLEEVGVRAQDRLDKMRQQLE). The tract at residues 79–254 (VLMEETMKEV…RLDKMRQQLE (176 aa)) is 8 X 22 AA approximate tandem repeats. The residue at position 142 (Met-142) is a Methionine sulfoxide. Residue Ser-146 is modified to Phosphoserine. Positions 157–167 (HLRKLRKRLLR) are LDL and other lipoprotein receptors binding. 161-164 (LRKR) serves as a coordination point for heparin. The tract at residues 209-289 (AATLSTQVGQ…SWFEPLVEDM (81 aa)) is lipid-binding and lipoprotein association. O-linked (GalNAc...) threonine glycosylation occurs at Thr-211. Residue 228–235 (RQKLHGRL) coordinates heparin. A homooligomerization region spans residues 265 to 316 (SQIRLQAEAFQARLRSWFEPLVEDMQRQWAGLVEKVQLALHLSPTSPPSENH). The tract at residues 277–289 (RLRSWFEPLVEDM) is specificity for association with VLDL.

It belongs to the apolipoprotein A1/A4/E family. Homotetramer. May interact with ABCA1; functionally associated with ABCA1 in the biogenesis of HDLs. May interact with APP/A4 amyloid-beta peptide; the interaction is extremely stable in vitro but its physiological significance is unclear. May interact with MAPT. May interact with MAP2. In the cerebrospinal fluid, interacts with secreted SORL1. Interacts with PMEL; this allows the loading of PMEL luminal fragment on ILVs to induce fibril nucleation. APOE exists as multiple glycosylated and sialylated glycoforms within cells and in plasma. The extent of glycosylation and sialylation are tissue and context specific. In terms of processing, glycated in plasma VLDL. Post-translationally, phosphorylated by FAM20C in the extracellular medium.

The protein localises to the secreted. The protein resides in the extracellular space. Its subcellular location is the extracellular matrix. It localises to the extracellular vesicle. It is found in the endosome. The protein localises to the multivesicular body. Its function is as follows. APOE is an apolipoprotein, a protein associating with lipid particles, that mainly functions in lipoprotein-mediated lipid transport between organs via the plasma and interstitial fluids. APOE is a core component of plasma lipoproteins and is involved in their production, conversion and clearance. Apolipoproteins are amphipathic molecules that interact both with lipids of the lipoprotein particle core and the aqueous environment of the plasma. As such, APOE associates with chylomicrons, chylomicron remnants, very low density lipoproteins (VLDL) and intermediate density lipoproteins (IDL) but shows a preferential binding to high-density lipoproteins (HDL). It also binds a wide range of cellular receptors including the LDL receptor/LDLR and the very low-density lipoprotein receptor/VLDLR that mediate the cellular uptake of the APOE-containing lipoprotein particles. Finally, APOE also has a heparin-binding activity and binds heparan-sulfate proteoglycans on the surface of cells, a property that supports the capture and the receptor-mediated uptake of APOE-containing lipoproteins by cells. This is Apolipoprotein E (APOE) from Ovis aries musimon (Mouflon).